The following is a 324-amino-acid chain: Cysteine-rich repeat secretory protein 9 (324 aa).

The N-terminal stretch at 1-27 is a signal peptide; the sequence is MARIIITLTIPLFYFFFFSLLSHQTMS. Gnk2-homologous domains follow at residues 29-132 and 138-248; these read PDHI…NVSF and IVPS…TSVL. The tract at residues 251 to 286 is disordered; sequence PPPSPSAPPPRSPPPKSSPPSSLPQTPSPPLVFTPP.

The protein belongs to the cysteine-rich repeat secretory protein family.

It localises to the secreted. The sequence is that of Cysteine-rich repeat secretory protein 9 (CRRSP9) from Arabidopsis thaliana (Mouse-ear cress).